We begin with the raw amino-acid sequence, 347 residues long: Phosphoribosylformylglycinamidine cyclo-ligase (347 aa).

This sequence belongs to the AIR synthase family.

Its subcellular location is the cytoplasm. The enzyme catalyses 2-formamido-N(1)-(5-O-phospho-beta-D-ribosyl)acetamidine + ATP = 5-amino-1-(5-phospho-beta-D-ribosyl)imidazole + ADP + phosphate + H(+). It participates in purine metabolism; IMP biosynthesis via de novo pathway; 5-amino-1-(5-phospho-D-ribosyl)imidazole from N(2)-formyl-N(1)-(5-phospho-D-ribosyl)glycinamide: step 2/2. In Dechloromonas aromatica (strain RCB), this protein is Phosphoribosylformylglycinamidine cyclo-ligase.